The following is a 264-amino-acid chain: MLDKVKNVIVVLSGKGGVGKSTVSTQLALALRATGHKVGLLDIDLCGPSVPYLLGLEGRDIFQCDDGWVPIYTDESKTLAVMSIGFLLKNRTDPVIWRGPKKTMMIKQFLSDVKWDELDYLIIDTPPGTSDEHITVMECLREVPCNGAIIVTTPQGVALDDVRKEITFCKKTGIKLLGIVENMSGFVCPHCTECTNIFSSNGGAELANLAQVPHLGTLPIDPRVGVLAGSTASALDELPDSSTAQILRGIVQHLDALTAVPAIA.

14–21 (GKGGVGKS) is an ATP binding site. Positions 188 and 191 each coordinate [4Fe-4S] cluster.

Belongs to the Mrp/NBP35 ATP-binding proteins family. NUBP2/CFD1 subfamily. As to quaternary structure, heterotetramer of 2 Nubp1 and 2 Nubp2 chains. Requires [4Fe-4S] cluster as cofactor.

It is found in the cytoplasm. Its function is as follows. Component of the cytosolic iron-sulfur (Fe/S) protein assembly (CIA) machinery. Required for maturation of extramitochondrial Fe-S proteins. The Nubp1-Nubp2 heterotetramer forms a Fe-S scaffold complex, mediating the de novo assembly of an Fe-S cluster and its transfer to target apoproteins. This Drosophila grimshawi (Hawaiian fruit fly) protein is Cytosolic Fe-S cluster assembly factor Nubp2 homolog.